Reading from the N-terminus, the 1141-residue chain is Serine-aspartate repeat-containing protein E (1141 aa).

The N-terminal stretch at 1–52 (MINRDNKKAITKKGMISNRLNKFSIRKYTVGTASILVGTTLIFGLGNQEAKA) is a signal peptide. A YSIRK-G/S signaling motif motif is present at residues 23–34 (FSIRKYTVGTAS). Residues 53–601 (AENTSTENAK…GDGTVKPEEK (549 aa)) are ligand binding A region. Positions 54–248 (ENTSTENAKQ…RSTKPVATAP (195 aa)) are disordered. The span at 61–75 (AKQDDATTSDNKEVV) shows a compositional bias: basic and acidic residues. Residues 77–90 (ETENNSTTENDSTN) show a composition bias toward low complexity. A compositionally biased stretch (basic and acidic residues) spans 92-108 (IKKETNTDSQPEAKEES). Positions 109-126 (TTSSTQQQQNNVTATTET) are enriched in low complexity. Over residues 130–145 (NIEKENVKPSTDKTAT) the composition is skewed to basic and acidic residues. The span at 159–207 (NYTNNDVTTKPSTSEIQTKPTTPQESTNIENSQPQPTPSKVDNQVTDAT) shows a compositional bias: polar residues. Residues 216 to 241 (SKEELKNNPEKLKELVRNDNNTDRST) are compositionally biased toward basic and acidic residues. CNA-B domains lie at 602 to 714 (LYKI…YKEP), 715 to 824 (KYNL…YKTP), and 825 to 935 (KYSL…EEDT). Positions 899 to 1117 (VTNTTEDDKD…GSENNGSNNA (219 aa)) are disordered. Acidic residues-rich tracts occupy residues 903 to 913 (TEDDKDADGGE) and 930 to 1080 (YFEE…DSDS). Positions 1104–1108 (LPETG) match the LPXTG sorting signal motif. The residue at position 1107 (threonine 1107) is a Pentaglycyl murein peptidoglycan amidated threonine. Residues 1108–1141 (GSENNGSNNATLFGGLFAALGSLLLFGRRKKQNK) constitute a propeptide, removed by sortase.

It belongs to the serine-aspartate repeat-containing protein (SDr) family. Interacts with host complement factor H/CFAH (via C-terminus). Interacts with host complement regulator C4BPA.

It is found in the secreted. It localises to the cell wall. Cell surface-associated calcium-binding protein which plays an important role in adhesion and pathogenesis. Contributes to the resistance to killing by innate immune components in blood and thus attenuates bacterial clearance by interacting with host complement factor H/CFAH and modulating its activity. Also inhibits bacterial opsonization and killing by interacting with host complement regulator C4BPA and thus inhibiting classical complement pathway activation. The protein is Serine-aspartate repeat-containing protein E (sdrE) of Staphylococcus aureus (strain N315).